The sequence spans 571 residues: Dihydroxy-acid dehydratase (571 aa).

Cysteine 56 provides a ligand contact to [2Fe-2S] cluster. Mg(2+) is bound at residue aspartate 88. Cysteine 129 provides a ligand contact to [2Fe-2S] cluster. Mg(2+)-binding residues include aspartate 130 and lysine 131. The residue at position 131 (lysine 131) is an N6-carboxylysine. Cysteine 201 is a [2Fe-2S] cluster binding site. Residue glutamate 452 coordinates Mg(2+). The active-site Proton acceptor is serine 478.

The protein belongs to the IlvD/Edd family. In terms of assembly, homodimer. Requires [2Fe-2S] cluster as cofactor. The cofactor is Mg(2+).

It carries out the reaction (2R)-2,3-dihydroxy-3-methylbutanoate = 3-methyl-2-oxobutanoate + H2O. It catalyses the reaction (2R,3R)-2,3-dihydroxy-3-methylpentanoate = (S)-3-methyl-2-oxopentanoate + H2O. It participates in amino-acid biosynthesis; L-isoleucine biosynthesis; L-isoleucine from 2-oxobutanoate: step 3/4. The protein operates within amino-acid biosynthesis; L-valine biosynthesis; L-valine from pyruvate: step 3/4. Functionally, functions in the biosynthesis of branched-chain amino acids. Catalyzes the dehydration of (2R,3R)-2,3-dihydroxy-3-methylpentanoate (2,3-dihydroxy-3-methylvalerate) into 2-oxo-3-methylpentanoate (2-oxo-3-methylvalerate) and of (2R)-2,3-dihydroxy-3-methylbutanoate (2,3-dihydroxyisovalerate) into 2-oxo-3-methylbutanoate (2-oxoisovalerate), the penultimate precursor to L-isoleucine and L-valine, respectively. The protein is Dihydroxy-acid dehydratase of Streptococcus suis (strain 98HAH33).